A 1917-amino-acid chain; its full sequence is Diacylglycerol kinase eta (1917 aa).

Residues 1–10 (MSHLKLDTLH) are compositionally biased toward basic and acidic residues. The tract at residues 1 to 37 (MSHLKLDTLHVQRSPRGSRRSSRSSGRSSACSSGSIS) is disordered. Positions 23–37 (RSSGRSSACSSGSIS) are enriched in low complexity. A PH domain is found at 82 to 175 (AIIKEGFLLK…WLGSLKTATA (94 aa)). 2 Phorbol-ester/DAG-type zinc fingers span residues 195 to 245 (HHHW…IANC) and 268 to 319 (PHQW…AVAC). Residues 350-486 (GNFSPLLVFV…DRWSIMVFEK (137 aa)) form the DAGKc domain. 3 disordered regions span residues 1015 to 1053 (TTLC…PPRI), 1114 to 1149 (LEQQ…SEDE), and 1380 to 1399 (KDKD…EETN). Polar residues predominate over residues 1128 to 1145 (PEQQQTPTNKGPNSLATT). The region spanning 1854–1917 (WSVNEVVTWL…LQAIKDLSEN (64 aa)) is the SAM domain.

It belongs to the eukaryotic diacylglycerol kinase family.

The protein resides in the cytoplasm. It catalyses the reaction a 1,2-diacyl-sn-glycerol + ATP = a 1,2-diacyl-sn-glycero-3-phosphate + ADP + H(+). Functionally, phosphorylates diacylglycerol (DAG) to generate phosphatidic acid (PA). The chain is Diacylglycerol kinase eta from Drosophila yakuba (Fruit fly).